Reading from the N-terminus, the 299-residue chain is Peroxisomal biogenesis factor 19 (299 aa).

The residue at position 2 (alanine 2) is an N-acetylalanine. The segment at 2–56 is docking to the peroxisome membrane and binding to PEX3; sequence AAAEGGCGAGVEADRELEELLESALDDFDKAKPSPAPSPTISAPDASGPQKRSPG. Residues 2 to 91 are necessary for PEX19 function on peroxisome biogenesis; sequence AAAEGGCGAG…QATAEFEKAM (90 aa). The interval 25-63 is disordered; that stretch reads ALDDFDKAKPSPAPSPTISAPDASGPQKRSPGDTAKDAL. Phosphoserine occurs at positions 35, 39, 54, and 66. Threonine 236 carries the post-translational modification Phosphothreonine. The residue at position 296 (cysteine 296) is a Cysteine methyl ester. Cysteine 296 carries the S-farnesyl cysteine lipid modification. A propeptide spans 297 to 299 (removed in mature form); that stretch reads LIM.

Belongs to the peroxin-19 family. Interacts with a broad range of peroxisomal membrane proteins, including PEX3, PEX10, PEX11A, PEX11B, PEX12, PEX13, PEX14 and PEX16, PXMP2/PMP22, PXMP4/PMP24, SLC25A17/PMP34, ABCD1/ALDP, ABCD2/ALDRP, and ABCD3/PMP70. Also interacts with the tumor suppressor CDKN2A/p19ARF.

It is found in the cytoplasm. The protein resides in the peroxisome membrane. Necessary for early peroxisomal biogenesis. Acts both as a cytosolic chaperone and as an import receptor for peroxisomal membrane proteins (PMPs). Binds and stabilizes newly synthesized PMPs in the cytoplasm by interacting with their hydrophobic membrane-spanning domains, and targets them to the peroxisome membrane by binding to the integral membrane protein PEX3. Excludes CDKN2A from the nucleus and prevents its interaction with MDM2, which results in active degradation of TP53. This Rattus norvegicus (Rat) protein is Peroxisomal biogenesis factor 19 (Pex19).